The sequence spans 434 residues: 3-phosphoshikimate 1-carboxyvinyltransferase (434 aa).

Positions 22, 23, and 27 each coordinate 3-phosphoshikimate. Phosphoenolpyruvate is bound at residue lysine 22. Glycine 93 and arginine 121 together coordinate phosphoenolpyruvate. Positions 168, 169, 170, 199, 320, and 347 each coordinate 3-phosphoshikimate. Glutamine 170 is a phosphoenolpyruvate binding site. Residue aspartate 320 is the Proton acceptor of the active site. The phosphoenolpyruvate site is built by arginine 351, arginine 395, and lysine 420.

The protein belongs to the EPSP synthase family. In terms of assembly, monomer.

It localises to the cytoplasm. It carries out the reaction 3-phosphoshikimate + phosphoenolpyruvate = 5-O-(1-carboxyvinyl)-3-phosphoshikimate + phosphate. It functions in the pathway metabolic intermediate biosynthesis; chorismate biosynthesis; chorismate from D-erythrose 4-phosphate and phosphoenolpyruvate: step 6/7. Its function is as follows. Catalyzes the transfer of the enolpyruvyl moiety of phosphoenolpyruvate (PEP) to the 5-hydroxyl of shikimate-3-phosphate (S3P) to produce enolpyruvyl shikimate-3-phosphate and inorganic phosphate. The chain is 3-phosphoshikimate 1-carboxyvinyltransferase from Cupriavidus taiwanensis (strain DSM 17343 / BCRC 17206 / CCUG 44338 / CIP 107171 / LMG 19424 / R1) (Ralstonia taiwanensis (strain LMG 19424)).